We begin with the raw amino-acid sequence, 349 residues long: Protein-glutamate methylesterase/protein-glutamine glutaminase (349 aa).

The Response regulatory domain occupies 5 to 122; that stretch reads RVLCVDDSAL…REGMLAYSEL (118 aa). Residue D56 is modified to 4-aspartylphosphate. In terms of domain architecture, CheB-type methylesterase spans 152–344; the sequence is LLSSEKLIAI…QRMLAQISSG (193 aa). Active-site residues include S164, H190, and D286.

Belongs to the CheB family. Post-translationally, phosphorylated by CheA. Phosphorylation of the N-terminal regulatory domain activates the methylesterase activity.

The protein resides in the cytoplasm. The catalysed reaction is [protein]-L-glutamate 5-O-methyl ester + H2O = L-glutamyl-[protein] + methanol + H(+). It catalyses the reaction L-glutaminyl-[protein] + H2O = L-glutamyl-[protein] + NH4(+). Its function is as follows. Involved in chemotaxis. Part of a chemotaxis signal transduction system that modulates chemotaxis in response to various stimuli. Catalyzes the demethylation of specific methylglutamate residues introduced into the chemoreceptors (methyl-accepting chemotaxis proteins or MCP) by CheR. Also mediates the irreversible deamidation of specific glutamine residues to glutamic acid. In Yersinia pseudotuberculosis serotype I (strain IP32953), this protein is Protein-glutamate methylesterase/protein-glutamine glutaminase.